The sequence spans 403 residues: 4-hydroxy-3-methylbut-2-enyl diphosphate reductase (403 aa).

A [4Fe-4S] cluster-binding site is contributed by C66. H96 contacts (2E)-4-hydroxy-3-methylbut-2-enyl diphosphate. Residue H96 coordinates dimethylallyl diphosphate. H96 provides a ligand contact to isopentenyl diphosphate. C157 contributes to the [4Fe-4S] cluster binding site. H185 provides a ligand contact to (2E)-4-hydroxy-3-methylbut-2-enyl diphosphate. H185 is a binding site for dimethylallyl diphosphate. Residue H185 participates in isopentenyl diphosphate binding. Catalysis depends on E187, which acts as the Proton donor. T250 lines the (2E)-4-hydroxy-3-methylbut-2-enyl diphosphate pocket. Residue C288 participates in [4Fe-4S] cluster binding. Residues S317, S318, N319, and S379 each contribute to the (2E)-4-hydroxy-3-methylbut-2-enyl diphosphate site. Dimethylallyl diphosphate is bound by residues S317, S318, N319, and S379. Isopentenyl diphosphate-binding residues include S317, S318, N319, and S379.

Belongs to the IspH family. [4Fe-4S] cluster serves as cofactor.

The enzyme catalyses isopentenyl diphosphate + 2 oxidized [2Fe-2S]-[ferredoxin] + H2O = (2E)-4-hydroxy-3-methylbut-2-enyl diphosphate + 2 reduced [2Fe-2S]-[ferredoxin] + 2 H(+). It catalyses the reaction dimethylallyl diphosphate + 2 oxidized [2Fe-2S]-[ferredoxin] + H2O = (2E)-4-hydroxy-3-methylbut-2-enyl diphosphate + 2 reduced [2Fe-2S]-[ferredoxin] + 2 H(+). It participates in isoprenoid biosynthesis; dimethylallyl diphosphate biosynthesis; dimethylallyl diphosphate from (2E)-4-hydroxy-3-methylbutenyl diphosphate: step 1/1. Its pathway is isoprenoid biosynthesis; isopentenyl diphosphate biosynthesis via DXP pathway; isopentenyl diphosphate from 1-deoxy-D-xylulose 5-phosphate: step 6/6. In terms of biological role, catalyzes the conversion of 1-hydroxy-2-methyl-2-(E)-butenyl 4-diphosphate (HMBPP) into a mixture of isopentenyl diphosphate (IPP) and dimethylallyl diphosphate (DMAPP). Acts in the terminal step of the DOXP/MEP pathway for isoprenoid precursor biosynthesis. This chain is 4-hydroxy-3-methylbut-2-enyl diphosphate reductase, found in Picosynechococcus sp. (strain ATCC 27264 / PCC 7002 / PR-6) (Agmenellum quadruplicatum).